Here is a 746-residue protein sequence, read N- to C-terminus: Exostosin-1 (746 aa).

The Cytoplasmic portion of the chain corresponds to 1-5 (MQAKK). A helical; Signal-anchor for type II membrane protein membrane pass occupies residues 6 to 26 (RYFILLSAGSCLALLFYFGGV). At 27–746 (QFRASRSHSR…RKKYRDIERL (720 aa)) the chain is on the lumenal side. Residue Asn89 is glycosylated (N-linked (GlcNAc...) asparagine). 2 disulfide bridges follow: Cys98–Cys103 and Cys109–Cys152. A protein-binding residues include Leu166 and Tyr203. Residues Lys267, Lys269, Tyr271, and Arg280 each contribute to the UDP site. Cysteines 298 and 312 form a disulfide. His300 is a binding site for a protein. The UDP site is built by Tyr319 and Tyr324. Asn330 carries an N-linked (GlcNAc...) asparagine glycan. Disulfide bonds link Cys334–Cys355 and Cys652–Cys704. Residues Arg346 and Glu349 each contribute to the UDP site.

Belongs to the glycosyltransferase 47 family. Part of the heparan sulfate polymerase, a dimeric complex composed of EXT1 and EXT2. Could also form homooligomeric complexes. Interacts with NDST1. N-glycosylated.

It is found in the golgi apparatus membrane. The protein resides in the golgi apparatus. Its subcellular location is the cis-Golgi network membrane. The protein localises to the endoplasmic reticulum membrane. The enzyme catalyses 3-O-{alpha-D-GlcNAc-[(1-&gt;4)-beta-D-GlcA-(1-&gt;4)-alpha-D-GlcNAc](n)-(1-&gt;4)-beta-D-GlcA-(1-&gt;3)-beta-D-Gal-(1-&gt;3)-beta-D-Gal-(1-&gt;4)-beta-D-Xyl}-L-seryl-[protein] + UDP-alpha-D-glucuronate = 3-O-{[(1-&gt;4)-beta-D-GlcA-(1-&gt;4)-alpha-D-GlcNAc](n+1)-(1-&gt;4)-beta-D-GlcA-(1-&gt;3)-beta-D-Gal-(1-&gt;3)-beta-D-Gal-(1-&gt;4)-beta-D-Xyl}-L-seryl-[protein] + UDP + H(+). The protein operates within protein modification; protein glycosylation. In terms of biological role, glycosyltransferase forming with EXT2 the heterodimeric heparan sulfate polymerase which catalyzes the elongation of the heparan sulfate glycan backbone. Glycan backbone extension consists in the alternating transfer of (1-&gt;4)-beta-D-GlcA and (1-&gt;4)-alpha-D-GlcNAc residues from their respective UDP-sugar donors. Both EXT1 and EXT2 are required for the full activity of the polymerase since EXT1 bears the N-acetylglucosaminyl-proteoglycan 4-beta-glucuronosyltransferase activity within the complex while EXT2 carries the glucuronosyl-N-acetylglucosaminyl-proteoglycan 4-alpha-N-acetylglucosaminyltransferase activity. Heparan sulfate proteoglycans are ubiquitous components of the extracellular matrix and play an important role in tissue homeostasis and signaling. The chain is Exostosin-1 from Cricetulus griseus (Chinese hamster).